The primary structure comprises 297 residues: Phosphoribosylaminoimidazole-succinocarboxamide synthase (297 aa).

Belongs to the SAICAR synthetase family.

The catalysed reaction is 5-amino-1-(5-phospho-D-ribosyl)imidazole-4-carboxylate + L-aspartate + ATP = (2S)-2-[5-amino-1-(5-phospho-beta-D-ribosyl)imidazole-4-carboxamido]succinate + ADP + phosphate + 2 H(+). The protein operates within purine metabolism; IMP biosynthesis via de novo pathway; 5-amino-1-(5-phospho-D-ribosyl)imidazole-4-carboxamide from 5-amino-1-(5-phospho-D-ribosyl)imidazole-4-carboxylate: step 1/2. This is Phosphoribosylaminoimidazole-succinocarboxamide synthase from Mycobacteroides abscessus (strain ATCC 19977 / DSM 44196 / CCUG 20993 / CIP 104536 / JCM 13569 / NCTC 13031 / TMC 1543 / L948) (Mycobacterium abscessus).